We begin with the raw amino-acid sequence, 712 residues long: Polyribonucleotide nucleotidyltransferase (712 aa).

Residues D487 and D493 each coordinate Mg(2+). The region spanning 554–613 is the KH domain; it reads PKIITMTINPDKIRDVIGPSGKQINKIIEETGVKIDIEQDGTVFISSINQEMNDKAKKII. The region spanning 623 to 691 is the S1 motif domain; that stretch reads GEIYEGKVKR…KQGRVNLSRK (69 aa).

Belongs to the polyribonucleotide nucleotidyltransferase family. Requires Mg(2+) as cofactor.

The protein resides in the cytoplasm. The catalysed reaction is RNA(n+1) + phosphate = RNA(n) + a ribonucleoside 5'-diphosphate. In terms of biological role, involved in mRNA degradation. Catalyzes the phosphorolysis of single-stranded polyribonucleotides processively in the 3'- to 5'-direction. The sequence is that of Polyribonucleotide nucleotidyltransferase from Bacillus cereus (strain 03BB102).